A 193-amino-acid polypeptide reads, in one-letter code: Small ribosomal subunit protein uS7 (193 aa).

Belongs to the universal ribosomal protein uS7 family. Part of the 30S ribosomal subunit.

One of the primary rRNA binding proteins, it binds directly to 16S rRNA where it nucleates assembly of the head domain of the 30S subunit. Is located at the subunit interface close to the decoding center. This Saccharolobus solfataricus (strain ATCC 35092 / DSM 1617 / JCM 11322 / P2) (Sulfolobus solfataricus) protein is Small ribosomal subunit protein uS7.